A 274-amino-acid chain; its full sequence is Ethanolamine ammonia-lyase small subunit (274 aa).

Positions 161, 182, and 211 each coordinate adenosylcob(III)alamin.

The protein belongs to the EutC family. The basic unit is a heterodimer which dimerizes to form tetramers. The heterotetramers trimerize; 6 large subunits form a core ring with 6 small subunits projecting outwards. It depends on adenosylcob(III)alamin as a cofactor.

The protein resides in the bacterial microcompartment. The enzyme catalyses ethanolamine = acetaldehyde + NH4(+). Its pathway is amine and polyamine degradation; ethanolamine degradation. Catalyzes the deamination of various vicinal amino-alcohols to oxo compounds. Allows this organism to utilize ethanolamine as the sole source of nitrogen and carbon in the presence of external vitamin B12. The chain is Ethanolamine ammonia-lyase small subunit from Pseudomonas fluorescens (strain ATCC BAA-477 / NRRL B-23932 / Pf-5).